Reading from the N-terminus, the 202-residue chain is Large ribosomal subunit protein bL9 (202 aa).

The segment at 177 to 202 is disordered; sequence AGEFFDPEAEPDDVAEAGGEQTAEEK. Residues 181–191 are compositionally biased toward acidic residues; the sequence is FDPEAEPDDVA.

It belongs to the bacterial ribosomal protein bL9 family.

Binds to the 23S rRNA. This Nitrobacter hamburgensis (strain DSM 10229 / NCIMB 13809 / X14) protein is Large ribosomal subunit protein bL9.